Reading from the N-terminus, the 299-residue chain is MMGKEEEIARIARRLDKMVTKKSAEGAMDLLRELKAMPITLHLLQSTRVGMSVNALRKQSSDEEVIALAKSLIKSWKKLLDASDAKARERGRGMPLPTSSRDASEAPDPSRKRPELPRAPSTPRITTFPPVPVTCDAVRNKCREMLTAALQTDHDHVAIGADCERLSAQIEECIFRDVGNTDMKYKNRVRSRISNLKDAKNPDLRRNVLCGAITPQQIAVMTSEEMASDELKEIRKAMTKEAIREHQMARTGGTQTDLFTCGKCRKKNCTYTQVQTRSSDEPMTTFVVCNECGNRWKFC.

In terms of domain architecture, TFIIS N-terminal spans 6–83; sequence EEIARIARRL…KSWKKLLDAS (78 aa). Lysine 58 participates in a covalent cross-link: Glycyl lysine isopeptide (Lys-Gly) (interchain with G-Cter in ubiquitin). Phosphoserine occurs at positions 60 and 100. Residues 86 to 128 are disordered; that stretch reads KARERGRGMPLPTSSRDASEAPDPSRKRPELPRAPSTPRITTF. Basic and acidic residues predominate over residues 102–116; sequence DASEAPDPSRKRPEL. The TFIIS central domain occupies 138–254; sequence VRNKCREMLT…EHQMARTGGT (117 aa). The segment at 257–297 adopts a TFIIS-type zinc-finger fold; that stretch reads DLFTCGKCRKKNCTYTQVQTRSSDEPMTTFVVCNECGNRWK. Residues cysteine 261, cysteine 264, cysteine 289, and cysteine 292 each contribute to the Zn(2+) site.

The protein belongs to the TFS-II family. As to quaternary structure, interacts with the basal transcription factor GTF2B. Interacts with REXO1. Testis and ovary specific.

Its subcellular location is the nucleus. Necessary for efficient RNA polymerase II transcription elongation past template-encoded arresting sites. The arresting sites in DNA have the property of trapping a certain fraction of elongating RNA polymerases that pass through, resulting in locked ternary complexes. Cleavage of the nascent transcript by S-II allows the resumption of elongation from the new 3'-terminus. This Homo sapiens (Human) protein is Transcription elongation factor A protein 2 (TCEA2).